A 331-amino-acid chain; its full sequence is Holliday junction branch migration complex subunit RuvB (331 aa).

Residues 1–178 (MRNSIFEQEE…FGITLRLDFY (178 aa)) form a large ATPase domain (RuvB-L) region. ATP contacts are provided by residues leucine 17, arginine 18, glycine 59, lysine 62, threonine 63, threonine 64, 125–127 (EDY), arginine 168, tyrosine 178, and arginine 215. Position 63 (threonine 63) interacts with Mg(2+). Positions 179–249 (TVSELLQLLQ…FADLALNKME (71 aa)) are small ATPAse domain (RuvB-S). The segment at 252–331 (QFGLDKLDYT…LSTINSARLP (80 aa)) is head domain (RuvB-H). 2 residues coordinate DNA: arginine 307 and arginine 312.

This sequence belongs to the RuvB family. As to quaternary structure, homohexamer. Forms an RuvA(8)-RuvB(12)-Holliday junction (HJ) complex. HJ DNA is sandwiched between 2 RuvA tetramers; dsDNA enters through RuvA and exits via RuvB. An RuvB hexamer assembles on each DNA strand where it exits the tetramer. Each RuvB hexamer is contacted by two RuvA subunits (via domain III) on 2 adjacent RuvB subunits; this complex drives branch migration. In the full resolvosome a probable DNA-RuvA(4)-RuvB(12)-RuvC(2) complex forms which resolves the HJ.

It localises to the cytoplasm. The enzyme catalyses ATP + H2O = ADP + phosphate + H(+). In terms of biological role, the RuvA-RuvB-RuvC complex processes Holliday junction (HJ) DNA during genetic recombination and DNA repair, while the RuvA-RuvB complex plays an important role in the rescue of blocked DNA replication forks via replication fork reversal (RFR). RuvA specifically binds to HJ cruciform DNA, conferring on it an open structure. The RuvB hexamer acts as an ATP-dependent pump, pulling dsDNA into and through the RuvAB complex. RuvB forms 2 homohexamers on either side of HJ DNA bound by 1 or 2 RuvA tetramers; 4 subunits per hexamer contact DNA at a time. Coordinated motions by a converter formed by DNA-disengaged RuvB subunits stimulates ATP hydrolysis and nucleotide exchange. Immobilization of the converter enables RuvB to convert the ATP-contained energy into a lever motion, pulling 2 nucleotides of DNA out of the RuvA tetramer per ATP hydrolyzed, thus driving DNA branch migration. The RuvB motors rotate together with the DNA substrate, which together with the progressing nucleotide cycle form the mechanistic basis for DNA recombination by continuous HJ branch migration. Branch migration allows RuvC to scan DNA until it finds its consensus sequence, where it cleaves and resolves cruciform DNA. The protein is Holliday junction branch migration complex subunit RuvB of Neorickettsia sennetsu (strain ATCC VR-367 / Miyayama) (Ehrlichia sennetsu).